The primary structure comprises 504 residues: 6,7,8-trihydroxycoumarin synthase (504 aa).

The helical transmembrane segment at Met-1–Phe-21 threads the bilayer. The tract at residues Pro-363–Val-368 is substrate specificity. Heme is bound at residue Cys-444.

Belongs to the cytochrome P450 family. Requires heme as cofactor.

The protein localises to the microsome membrane. The protein operates within secondary metabolite biosynthesis. Involved in the biosynthesis of coumarins and furanocoumarins (FCs), natural products required for defense responses against attacks by predators with potential medical and agroindustrial usages such as anticoagulant, rodenticide and artificial vanilla substitutes. Able to catalyze the hydroxylation of esculetin to produce 6,7,8-trihydroxycoumarin. This is 6,7,8-trihydroxycoumarin synthase from Pastinaca sativa (Wild parsnip).